We begin with the raw amino-acid sequence, 425 residues long: Malate transporter MleP (425 aa).

11 consecutive transmembrane segments (helical) span residues 11 to 31 (GISL…TLLG), 35 to 55 (LDMV…YFIG), 65 to 85 (LGGG…FHIV), 96 to 116 (FMGG…CGSI), 134 to 154 (IALI…MLIG), 196 to 216 (IFSQ…IGAL), 246 to 266 (IKLD…LLMA), 269 to 289 (ILNK…IVFI), 310 to 330 (VIMT…LIDL), 339 to 359 (WQFV…SWFL), and 401 to 421 (FAQM…GILI).

This sequence belongs to the 2-hydroxycarboxylate transporter (2-HCT) (TC 2.A.24) family.

The protein localises to the cell membrane. It catalyses the reaction (S)-lactate(in) + (S)-malate(out) = (S)-lactate(out) + (S)-malate(in). The catalysed reaction is (R)-lactate(in) + (S)-malate(out) = (R)-lactate(out) + (S)-malate(in). The enzyme catalyses glycolate(in) + (S)-malate(out) = glycolate(out) + (S)-malate(in). Functionally, secondary transporter involved in malolactic fermentation. Catalyzes the uptake of divalent malate into the cell coupled to the exit of monovalent lactate, a product of malate degradation (precursor/product exchange). The malate/lactate exchange is electrogenic and results in the generation of a membrane potential. Is highly selective for the S-enantiomer of malate. In the absence of lactate, MleP can also catalyze the proton-dependent transport of malate. In vitro, transports a range of substrates that contain the 2-hydroxycarboxylate motif, HO-CR(2)-COO(-), with a preference for malate, lactate and glycolate. Modification of the OH or the COO(-) groups of the 2-hydroxycarboxylate motif drastically reduces the affinity of the transporter for the substrates, indicating their relevance in substrate recognition. Significant activity is also observed with some 2-oxocarboxylates. Transports only poorly citromalate. Citrate binds to MleP but is not translocated. The chain is Malate transporter MleP from Lactococcus lactis subsp. lactis (strain IL1403) (Streptococcus lactis).